A 720-amino-acid polypeptide reads, in one-letter code: ATP-dependent DNA helicase Hel308 (720 aa).

Residues Ser23, Gln28, and 46-53 (IPTASGKT) each bind ATP. A Helicase ATP-binding domain is found at 33–197 (KSGILEGKNA…WLNAELIVSD (165 aa)). A DEAH box motif is present at residues 145 to 148 (DEIH). The 194-residue stretch at 229–422 (LVYDAIRKKK…NLRSQVLALI (194 aa)) folds into the Helicase C-terminal domain.

Belongs to the helicase family. Hel308 subfamily. In terms of assembly, monomer. Interacts with PCNA. It depends on Mg(2+) as a cofactor. The cofactor is Zn(2+).

The catalysed reaction is Couples ATP hydrolysis with the unwinding of duplex DNA by translocating in the 3'-5' direction.. The enzyme catalyses ATP + H2O = ADP + phosphate + H(+). DNA-dependent ATPase and 3'-5' DNA helicase that may be involved in repair of stalled replication forks. Unwinds the lagging strand from forked DNA structures in a 3'-5' direction. PCNA, the DNA polymerase sliding clamp subunit, stimulates the helicase activity, and may alter substrate specificity. Unwinds branched DNA (Holliday junctions) in an ATP-dependent fashion; ss- and dsDNA stimulate ATPase to the greatest extent, although it preferentially binds DNA with a single-stranded region. Processes a RecA-mediated recombination intermediate between gapped circular and homologous linear dsDNA. The polypeptide is ATP-dependent DNA helicase Hel308 (Pyrococcus furiosus (strain ATCC 43587 / DSM 3638 / JCM 8422 / Vc1)).